Here is a 615-residue protein sequence, read N- to C-terminus: Dihydroxy-acid dehydratase (615 aa).

Aspartate 81 contacts Mg(2+). Cysteine 122 is a binding site for [2Fe-2S] cluster. Mg(2+) contacts are provided by aspartate 123 and lysine 124. N6-carboxylysine is present on lysine 124. Cysteine 193 provides a ligand contact to [2Fe-2S] cluster. Glutamate 489 contributes to the Mg(2+) binding site. Residue serine 515 is the Proton acceptor of the active site.

Belongs to the IlvD/Edd family. As to quaternary structure, homodimer. Requires [2Fe-2S] cluster as cofactor. Mg(2+) serves as cofactor.

It carries out the reaction (2R)-2,3-dihydroxy-3-methylbutanoate = 3-methyl-2-oxobutanoate + H2O. The enzyme catalyses (2R,3R)-2,3-dihydroxy-3-methylpentanoate = (S)-3-methyl-2-oxopentanoate + H2O. It functions in the pathway amino-acid biosynthesis; L-isoleucine biosynthesis; L-isoleucine from 2-oxobutanoate: step 3/4. Its pathway is amino-acid biosynthesis; L-valine biosynthesis; L-valine from pyruvate: step 3/4. In terms of biological role, functions in the biosynthesis of branched-chain amino acids. Catalyzes the dehydration of (2R,3R)-2,3-dihydroxy-3-methylpentanoate (2,3-dihydroxy-3-methylvalerate) into 2-oxo-3-methylpentanoate (2-oxo-3-methylvalerate) and of (2R)-2,3-dihydroxy-3-methylbutanoate (2,3-dihydroxyisovalerate) into 2-oxo-3-methylbutanoate (2-oxoisovalerate), the penultimate precursor to L-isoleucine and L-valine, respectively. The protein is Dihydroxy-acid dehydratase of Pseudomonas savastanoi pv. phaseolicola (strain 1448A / Race 6) (Pseudomonas syringae pv. phaseolicola (strain 1448A / Race 6)).